The chain runs to 134 residues: Small ribosomal subunit protein uS11 (134 aa).

It belongs to the universal ribosomal protein uS11 family. As to quaternary structure, part of the 30S ribosomal subunit. Interacts with proteins S7 and S18. Binds to IF-3.

In terms of biological role, located on the platform of the 30S subunit, it bridges several disparate RNA helices of the 16S rRNA. Forms part of the Shine-Dalgarno cleft in the 70S ribosome. This is Small ribosomal subunit protein uS11 from Corynebacterium glutamicum (strain R).